Here is a 347-residue protein sequence, read N- to C-terminus: CD5 antigen-like (347 aa).

A signal peptide spans 1–19; sequence MALLFSLILAICTRPGFLA. SRCR domains follow at residues 24–125, 138–239, and 244–346; these read VRLV…ASCE, VRLA…VECE, and LRLV…VICS. 11 disulfide bridges follow: C33–C67, C49–C114, C62–C124, C96–C106, C163–C228, C176–C238, C208–C218, C253–C287, C269–C335, C282–C345, and C315–C325.

Interacts with FASN; the interaction is direct. Interacts (via SRCR2 and SRCR3) with pentameric IgM (via Fc region); disulfide-linked. In terms of processing, not N-glycosylated. Probably not O-glycosylated. In terms of tissue distribution, expressed in spleen, lymph node, thymus, bone marrow, and fetal liver, but not in non-lymphoid tissues.

The protein resides in the secreted. The protein localises to the cytoplasm. Secreted protein that acts as a key regulator of lipid synthesis: mainly expressed by macrophages in lymphoid and inflamed tissues and regulates mechanisms in inflammatory responses, such as infection or atherosclerosis. Able to inhibit lipid droplet size in adipocytes. Following incorporation into mature adipocytes via CD36-mediated endocytosis, associates with cytosolic FASN, inhibiting fatty acid synthase activity and leading to lipolysis, the degradation of triacylglycerols into glycerol and free fatty acids (FFA). CD5L-induced lipolysis occurs with progression of obesity: participates in obesity-associated inflammation following recruitment of inflammatory macrophages into adipose tissues, a cause of insulin resistance and obesity-related metabolic disease. Regulation of intracellular lipids mediated by CD5L has a direct effect on transcription regulation mediated by nuclear receptors ROR-gamma (RORC). Acts as a key regulator of metabolic switch in T-helper Th17 cells. Regulates the expression of pro-inflammatory genes in Th17 cells by altering the lipid content and limiting synthesis of cholesterol ligand of RORC, the master transcription factor of Th17-cell differentiation. CD5L is mainly present in non-pathogenic Th17 cells, where it decreases the content of polyunsaturated fatty acyls (PUFA), affecting two metabolic proteins MSMO1 and CYP51A1, which synthesize ligands of RORC, limiting RORC activity and expression of pro-inflammatory genes. Participates in obesity-associated autoimmunity via its association with IgM, interfering with the binding of IgM to Fcalpha/mu receptor and enhancing the development of long-lived plasma cells that produce high-affinity IgG autoantibodies. Also acts as an inhibitor of apoptosis in macrophages: promotes macrophage survival from the apoptotic effects of oxidized lipids in case of atherosclerosis. Involved in early response to microbial infection against various pathogens by acting as a pattern recognition receptor and by promoting autophagy. In Homo sapiens (Human), this protein is CD5 antigen-like (CD5L).